Consider the following 464-residue polypeptide: Glutathione reductase (464 aa).

Positions 17 and 18 each coordinate FAD. Ser17 is a binding site for glutathione. Arg24 serves as a coordination point for glutathione. FAD is bound by residues Glu37, Thr45, Cys46, and Lys54. A disulfide bridge connects residues Cys46 and Cys51. Tyr103 serves as a coordination point for glutathione. FAD is bound at residue Ala119. The NADP(+) site is built by Ala186, Ile189, Glu192, Arg209, Arg215, and Gly274. Asp315 is an FAD binding site. NADP(+) is bound at residue Glu321. FAD is bound at residue Thr323. A glutathione-binding site is contributed by Arg331. NADP(+) is bound at residue Val354. Residue His453 participates in FAD binding. The Proton acceptor role is filled by His453.

The protein belongs to the class-I pyridine nucleotide-disulfide oxidoreductase family. Homodimer. It depends on FAD as a cofactor.

It localises to the cytoplasm. The protein localises to the mitochondrion. The catalysed reaction is 2 glutathione + NADP(+) = glutathione disulfide + NADPH + H(+). Functionally, catalyzes the reduction of glutathione disulfide (GSSG) to reduced glutathione (GSH). Constitutes the major mechanism to maintain a high GSH:GSSG ratio in the cytosol. The polypeptide is Glutathione reductase (pgr1) (Schizosaccharomyces pombe (strain 972 / ATCC 24843) (Fission yeast)).